Here is a 328-residue protein sequence, read N- to C-terminus: Methionyl-tRNA formyltransferase (328 aa).

121–124 (SLLP) is a (6S)-5,6,7,8-tetrahydrofolate binding site.

This sequence belongs to the Fmt family.

It carries out the reaction L-methionyl-tRNA(fMet) + (6R)-10-formyltetrahydrofolate = N-formyl-L-methionyl-tRNA(fMet) + (6S)-5,6,7,8-tetrahydrofolate + H(+). Attaches a formyl group to the free amino group of methionyl-tRNA(fMet). The formyl group appears to play a dual role in the initiator identity of N-formylmethionyl-tRNA by promoting its recognition by IF2 and preventing the misappropriation of this tRNA by the elongation apparatus. The sequence is that of Methionyl-tRNA formyltransferase from Paraburkholderia xenovorans (strain LB400).